A 264-amino-acid chain; its full sequence is COP9 signalosome complex subunit 7b (264 aa).

Ala2 is modified (N-acetylalanine). Positions 2–159 (AGEQKPSSNL…QLLEVDFCIG (158 aa)) constitute a PCI domain. Residues 194–237 (RANQYKENHHRTQQQVEAEVSNIKKTLKATASSSAQEMEQQLAE) are a coiled coil. Residues 223–232 (TASSSAQEME) are compositionally biased toward polar residues. The segment at 223–264 (TASSSAQEMEQQLAERECPPHTEQRQPTKKMSKVKGLVSSRH) is disordered. Basic and acidic residues predominate over residues 235–248 (LAERECPPHTEQRQ).

The protein belongs to the CSN7/EIF3M family. CSN7 subfamily. Component of the CSN complex, composed of COPS1/GPS1, COPS2, COPS3, COPS4, COPS5, COPS6, COPS7 (COPS7A or COPS7B) and COPS8 and COPS9. In the complex, it probably interacts directly with COPS1, COPS2, COPS4, COPS5, COPS6 and COPS8. Interacts with EIF3S6.

It localises to the cytoplasm. It is found in the nucleus. Functionally, component of the COP9 signalosome complex (CSN), a complex involved in various cellular and developmental processes. The CSN complex is an essential regulator of the ubiquitin (Ubl) conjugation pathway by mediating the deneddylation of the cullin subunits of SCF-type E3 ligase complexes, leading to decrease the Ubl ligase activity of SCF-type complexes such as SCF, CSA or DDB2. The complex is also involved in phosphorylation of p53/TP53, JUN, I-kappa-B-alpha/NFKBIA, ITPK1 and IRF8/ICSBP, possibly via its association with CK2 and PKD kinases. CSN-dependent phosphorylation of TP53 and JUN promotes and protects degradation by the Ubl system, respectively. In Mus musculus (Mouse), this protein is COP9 signalosome complex subunit 7b (Cops7b).